The sequence spans 348 residues: WW domain binding protein 1-like (348 aa).

The chain crosses the membrane as a helical span at residues 42–62 (LWWFWLVWTVVIILSCCCVCH). Disordered regions lie at residues 111–253 (VVNR…RRFT) and 306–348 (CLSS…GSPS). A compositionally biased stretch (pro residues) spans 134–155 (LPPPPQGGPPGGSPPGADPPPQ). Low complexity predominate over residues 156 to 177 (GSQGAQSSPLSGPSRSSTRPPS). Position 177 is a phosphoserine (serine 177). Residues 220–234 (SECKEELLKDSRSER) show a composition bias toward basic and acidic residues. Positions 331–348 (NTINEQDSPNSQHSGSPS) are enriched in polar residues.

It localises to the membrane. The polypeptide is WW domain binding protein 1-like (Wbp1l) (Mus musculus (Mouse)).